The following is a 92-amino-acid chain: Putative pterin-4-alpha-carbinolamine dehydratase (92 aa).

The protein belongs to the pterin-4-alpha-carbinolamine dehydratase family.

It catalyses the reaction (4aS,6R)-4a-hydroxy-L-erythro-5,6,7,8-tetrahydrobiopterin = (6R)-L-erythro-6,7-dihydrobiopterin + H2O. This Natronomonas pharaonis (strain ATCC 35678 / DSM 2160 / CIP 103997 / JCM 8858 / NBRC 14720 / NCIMB 2260 / Gabara) (Halobacterium pharaonis) protein is Putative pterin-4-alpha-carbinolamine dehydratase.